Here is an 813-residue protein sequence, read N- to C-terminus: UPF0508 protein KLLA0A06237g (813 aa).

The tract at residues 478-537 (KKDKSKSQKNSTDSLAKLSDTKSIHPPESAMSSHASTPSSTSKSSKSSKSSSTLSPSTCK) is disordered. Over residues 506-537 (SAMSSHASTPSSTSKSSKSSKSSSTLSPSTCK) the composition is skewed to low complexity.

The protein belongs to the UPF0508 family.

The polypeptide is UPF0508 protein KLLA0A06237g (Kluyveromyces lactis (strain ATCC 8585 / CBS 2359 / DSM 70799 / NBRC 1267 / NRRL Y-1140 / WM37) (Yeast)).